Here is a 44-residue protein sequence, read N- to C-terminus: Somatoliberin (44 aa).

L44 is modified (leucine amide).

It belongs to the glucagon family.

Its subcellular location is the secreted. Its function is as follows. GRF is released by the hypothalamus and acts on the adenohypophyse to stimulate the secretion of growth hormone. This is Somatoliberin (GHRH) from Ovis aries (Sheep).